Here is a 661-residue protein sequence, read N- to C-terminus: Zeaxanthin epoxidase, chloroplastic (661 aa).

Residues 1–59 (MLLFRATLLPSPPFFHKTYFSHLSPVIFSDDPLPVSLQRNRVSGCRKQKWRQIRTLALQ) constitute a chloroplast transit peptide. FAD is bound by residues 81–109 (RILIAGGGIGGLVLALAAKKKGFDALVFE) and 359–372 (IFTWGKGRVTLLGD). In terms of domain architecture, FHA spans 555-609 (HIIGSISHDDSEGISIHLPFPQVHKTHARIACKDNIFYLTDLQSQYGTWITDNEG).

It depends on FAD as a cofactor. As to expression, expressed in flower buds, lips and leaves. Detected in roots.

The protein resides in the plastid. It is found in the chloroplast. It catalyses the reaction all-trans-zeaxanthin + 4 reduced [2Fe-2S]-[ferredoxin] + 2 O2 + 4 H(+) = all-trans-violaxanthin + 4 oxidized [2Fe-2S]-[ferredoxin] + 2 H2O. Its pathway is plant hormone biosynthesis; abscisate biosynthesis. Its function is as follows. Zeaxanthin epoxidase that plays an important role in the xanthophyll cycle and abscisic acid (ABA) biosynthesis. Converts zeaxanthin into antheraxanthin and subsequently violaxanthin. The chain is Zeaxanthin epoxidase, chloroplastic (ZEP) from Oncidium hybrid cultivar (Orchid).